A 397-amino-acid chain; its full sequence is Chorismate synthase (397 aa).

Positions 40 and 46 each coordinate NADP(+). FMN is bound by residues Arg-129–Ser-131, Gln-257–Ala-258, Gly-302, Lys-317–Ser-321, and Arg-343.

It belongs to the chorismate synthase family. Homotetramer. FMNH2 is required as a cofactor.

The catalysed reaction is 5-O-(1-carboxyvinyl)-3-phosphoshikimate = chorismate + phosphate. It participates in metabolic intermediate biosynthesis; chorismate biosynthesis; chorismate from D-erythrose 4-phosphate and phosphoenolpyruvate: step 7/7. Its function is as follows. Catalyzes the anti-1,4-elimination of the C-3 phosphate and the C-6 proR hydrogen from 5-enolpyruvylshikimate-3-phosphate (EPSP) to yield chorismate, which is the branch point compound that serves as the starting substrate for the three terminal pathways of aromatic amino acid biosynthesis. This reaction introduces a second double bond into the aromatic ring system. The sequence is that of Chorismate synthase from Chlorobium luteolum (strain DSM 273 / BCRC 81028 / 2530) (Pelodictyon luteolum).